Consider the following 1182-residue polypeptide: Tyrosine-protein kinase ABL2 (1182 aa).

Disordered regions lie at residues 1–47 (MGQQ…TGFN) and 60–80 (EDGFEGDKTGGSSPEALHRPY). Glycine 2 is lipidated: N-myristoyl glycine. The tract at residues 2-106 (GQQVGRVGEA…SKENLLGATE (105 aa)) is CAP. Positions 20–30 (RGIRGSSAARP) are enriched in low complexity. Position 97 is a phosphoserine (serine 97). The region spanning 107 to 167 (SDPNLFVALY…PSNYITPVNS (61 aa)) is the SH3 domain. Phosphotyrosine is present on residues tyrosine 116, tyrosine 161, tyrosine 174, tyrosine 185, tyrosine 218, and tyrosine 231. The SH2 domain maps to 173 to 263 (WYHGPVSRSA…GLVTTLHYPA (91 aa)). The residue at position 261 (tyrosine 261) is a Phosphotyrosine; by ABL1 and autocatalysis. A Phosphotyrosine; by autocatalysis modification is found at tyrosine 272. Residue serine 275 is modified to Phosphoserine. The Protein kinase domain occupies 288-539 (ITMKHKLGGG…PSFAETHQAF (252 aa)). An ATP-binding site is contributed by 294 to 302 (LGGGQYGEV). Phosphotyrosine is present on residues tyrosine 299 and tyrosine 303. Residues lysine 317 and 362-368 (EYMPYGN) each bind ATP. Aspartate 409 serves as the catalytic Proton acceptor. A Kinase activation loop motif is present at residues 427-451 (DFGLSRLMTGDTYTAHAGAKFPIKW). Phosphotyrosine; by autocatalysis and SRC-type Tyr-kinases is present on tyrosine 439. Position 459 is a phosphotyrosine (tyrosine 459). A Phosphotyrosine; by autocatalysis modification is found at tyrosine 568. The segment at 611–641 (IRGAQASSGSPALPRKQRDKSPSSLLEDAKE) is disordered. Phosphoserine is present on residues serine 620, serine 631, and serine 633. A Phosphotyrosine modification is found at aspartate 647. The tract at residues 654 to 674 (SSFMKKRNAPTPPKRSSSFRE) is disordered. The residue at position 655 (serine 655) is a Phosphoserine. The Nuclear localization signal signature appears at 658–660 (KKR). 2 positions are modified to phosphotyrosine: alanine 662 and arginine 668. Phosphoserine is present on residues serine 669, serine 670, and serine 671. Tyrosine 683 and tyrosine 718 each carry phosphotyrosine. Tyrosine 683 is modified (phosphotyrosine; by autocatalysis). Residues 694-930 (SLQHADGFSF…PVLPTTHNHK (237 aa)) are F-actin-binding. Residues 763-794 (LRAGKPTASDDTSKPFPRSNSTSSMSSGLPEQ) are disordered. At lysine 776 the chain carries N6-acetyllysine. Residues 780–791 (RSNSTSSMSSGL) show a composition bias toward polar residues. A Phosphoserine modification is found at serine 783. Threonine 800 is subject to Phosphothreonine. The segment covering 807–823 (RSKLQLERTVSTSSQPE) has biased composition (polar residues). The segment at 807 to 851 (RSKLQLERTVSTSSQPEENVDRANDMLPKKSEESAAPSRERPKAK) is disordered. Serine 817 and serine 820 each carry phosphoserine. The segment covering 825–849 (NVDRANDMLPKKSEESAAPSRERPK) has biased composition (basic and acidic residues). 2 positions are modified to phosphoserine: serine 915 and serine 936. Residues 964–1024 (HQVTSSGDKD…TSETQEGGKK (61 aa)) are disordered. Residues 1010-1019 (TAGQSTSETQ) are compositionally biased toward polar residues. An F-actin-binding region spans residues 1020 to 1182 (EGGKKAALGA…VQEISDVVQR (163 aa)).

This sequence belongs to the protein kinase superfamily. Tyr protein kinase family. ABL subfamily. In terms of assembly, interacts with PSMA7. Interacts with CTTN. Found in a complex with ABL1, ABL2, CRK and UNC119; leading to the inhibition of CRK phosphorylation by ABL kinases. The cofactor is Mg(2+). Mn(2+) is required as a cofactor. In terms of processing, phosphorylated at Tyr-261 by ABL1 in response to oxidative stress. Phosphorylated by PDGFRB. Polyubiquitinated. Polyubiquitination of ABL2 leads to degradation. Widely expressed.

Its subcellular location is the cytoplasm. It localises to the cytoskeleton. The catalysed reaction is L-tyrosyl-[protein] + ATP = O-phospho-L-tyrosyl-[protein] + ADP + H(+). Its activity is regulated as follows. Stabilized in the inactive form by an association between the SH3 domain and the SH2-TK linker region, interactions of the N-terminal cap, and contributions from an N-terminal myristoyl group and phospholipids. Activated by autophosphorylation as well as by SRC-family kinase-mediated phosphorylation. Activated by RIN1 binding to the SH2 and SH3 domains. Inhibited by imatinib mesylate (Gleevec) which is used for the treatment of chronic myeloid leukemia (CML). Phosphatidylinositol 4,5-bisphosphate (PIP2), a highly abundant phosphoinositide known to regulate cytoskeletal and membrane proteins, inhibits the tyrosine kinase activity. Functionally, non-receptor tyrosine-protein kinase that plays an ABL1-overlapping role in key processes linked to cell growth and survival such as cytoskeleton remodeling in response to extracellular stimuli, cell motility and adhesion and receptor endocytosis. Coordinates actin remodeling through tyrosine phosphorylation of proteins controlling cytoskeleton dynamics like MYH10 (involved in movement); CTTN (involved in signaling); or TUBA1 and TUBB (microtubule subunits). Binds directly F-actin and regulates actin cytoskeletal structure through its F-actin-bundling activity. Involved in the regulation of cell adhesion and motility through phosphorylation of key regulators of these processes such as CRK, CRKL, DOK1 or ARHGAP35. Adhesion-dependent phosphorylation of ARHGAP35 promotes its association with RASA1, resulting in recruitment of ARHGAP35 to the cell periphery where it inhibits RHO. Phosphorylates multiple receptor tyrosine kinases like PDGFRB and other substrates which are involved in endocytosis regulation such as RIN1. In brain, may regulate neurotransmission by phosphorylating proteins at the synapse. ABL2 also acts as a regulator of multiple pathological signaling cascades during infection. Pathogens can highjack ABL2 kinase signaling to reorganize the host actin cytoskeleton for multiple purposes, like facilitating intracellular movement and host cell exit. Finally, functions as its own regulator through autocatalytic activity as well as through phosphorylation of its inhibitor, ABI1. Positively regulates chemokine-mediated T-cell migration, polarization, and homing to lymph nodes and immune-challenged tissues, potentially via activation of NEDD9/HEF1 and RAP1. The protein is Tyrosine-protein kinase ABL2 (ABL2) of Homo sapiens (Human).